The sequence spans 357 residues: C-X-C chemokine receptor type 2 (357 aa).

Topologically, residues 1-45 are extracellular; sequence FNMESDSFEDFWKGEDLSNYSYSSTLPPFLLDAAPCEPESLEINK. N-linked (GlcNAc...) asparagine glycosylation is present at Asn19. The helical transmembrane segment at 46–72 threads the bilayer; it reads YFVVIIYALVFLLSLLGNSLVMLVILY. Over 73–81 the chain is Cytoplasmic; sequence SRVGRSVTD. The chain crosses the membrane as a helical span at residues 82-102; it reads VYLLNLALADLLFALTLPIWA. Topologically, residues 103-117 are extracellular; the sequence is ASKVNGWIFGTFLCK. Cys116 and Cys193 are oxidised to a cystine. A helical membrane pass occupies residues 118–139; it reads VVSLLKEVNFYSGILLLACISV. At 140-160 the chain is on the cytoplasmic side; the sequence is DRYLAIVHATRTLTQKRYLVK. A helical transmembrane segment spans residues 161–180; that stretch reads FICLSIWGLSLLLALPVLLF. The Extracellular segment spans residues 181-205; sequence RRTVYSSNVSPACYEDMGNNTANWR. A helical transmembrane segment spans residues 206 to 228; sequence MLLRILPQSFGFIVPLLIMLFCY. Residues 229 to 248 are Cytoplasmic-facing; sequence GFTLRTLFKAHMGQKHRAMR. The chain crosses the membrane as a helical span at residues 249 to 270; the sequence is VIFAVVLIFLLCWLPYNLVLLA. The Extracellular segment spans residues 271-291; that stretch reads DTLMRTQVIQETCERRNHIDR. Residues 292–312 traverse the membrane as a helical segment; it reads ALDATEILGILHSCLNPLIYA. Topologically, residues 313 to 357 are cytoplasmic; the sequence is FIGQKFRHGLLKILAIHGLISKDSLPKDSRPSFVGSSSGHTSTTL.

The protein belongs to the G-protein coupled receptor 1 family. In terms of assembly, interacts with IL8. Interacts with GNAI2. Post-translationally, phosphorylated upon ligand binding; which is required for desensitization.

The protein resides in the cell membrane. Functionally, receptor for interleukin-8 which is a powerful neutrophil chemotactic factor. Binding of IL-8 to the receptor causes activation of neutrophils. This response is mediated via a G-protein that activates a phosphatidylinositol-calcium second messenger system. Binds to IL-8 with high affinity. Also binds with high affinity to CXCL3, GRO/MGSA and NAP-2. The protein is C-X-C chemokine receptor type 2 (CXCR2) of Pan troglodytes (Chimpanzee).